Here is a 714-residue protein sequence, read N- to C-terminus: Polyribonucleotide nucleotidyltransferase (714 aa).

The Mg(2+) site is built by Asp490 and Asp496. The 60-residue stretch at 556–615 (PRIETMQIPTDKIREVIGSGGKVIREIVEVSGAKVDINDDGIIKIASPNGDSIKKAYDMI) folds into the KH domain. Positions 625–693 (GQVYTGKVVK…DRGKVRLSMK (69 aa)) constitute an S1 motif domain.

Belongs to the polyribonucleotide nucleotidyltransferase family. The cofactor is Mg(2+).

Its subcellular location is the cytoplasm. The enzyme catalyses RNA(n+1) + phosphate = RNA(n) + a ribonucleoside 5'-diphosphate. Involved in mRNA degradation. Catalyzes the phosphorolysis of single-stranded polyribonucleotides processively in the 3'- to 5'-direction. In Ruegeria pomeroyi (strain ATCC 700808 / DSM 15171 / DSS-3) (Silicibacter pomeroyi), this protein is Polyribonucleotide nucleotidyltransferase.